Here is a 287-residue protein sequence, read N- to C-terminus: 4-hydroxybenzoate octaprenyltransferase (287 aa).

A run of 7 helical transmembrane segments spans residues 30–50 (ALWI…FALG), 92–112 (IAIA…LNGL), 133–153 (FFAI…PMAF), 158–178 (DTVP…SVAY), 207–227 (VLAI…LGAA), 232–252 (WPYW…YTLI), and 266–286 (HNNW…ALAV).

It belongs to the UbiA prenyltransferase family. Mg(2+) serves as cofactor.

It is found in the cell inner membrane. It carries out the reaction all-trans-octaprenyl diphosphate + 4-hydroxybenzoate = 4-hydroxy-3-(all-trans-octaprenyl)benzoate + diphosphate. It functions in the pathway cofactor biosynthesis; ubiquinone biosynthesis. Functionally, catalyzes the prenylation of para-hydroxybenzoate (PHB) with an all-trans polyprenyl group. Mediates the second step in the final reaction sequence of ubiquinone-8 (UQ-8) biosynthesis, which is the condensation of the polyisoprenoid side chain with PHB, generating the first membrane-bound Q intermediate 3-octaprenyl-4-hydroxybenzoate. This is 4-hydroxybenzoate octaprenyltransferase from Burkholderia pseudomallei (strain 1106a).